The primary structure comprises 290 residues: 4-hydroxy-3-methylbut-2-enyl diphosphate reductase (290 aa).

Cys-12 contributes to the [4Fe-4S] cluster binding site. 2 residues coordinate (2E)-4-hydroxy-3-methylbut-2-enyl diphosphate: His-50 and His-83. Dimethylallyl diphosphate-binding residues include His-50 and His-83. Isopentenyl diphosphate is bound by residues His-50 and His-83. Cys-105 is a [4Fe-4S] cluster binding site. His-133 contributes to the (2E)-4-hydroxy-3-methylbut-2-enyl diphosphate binding site. Position 133 (His-133) interacts with dimethylallyl diphosphate. His-133 lines the isopentenyl diphosphate pocket. Catalysis depends on Glu-135, which acts as the Proton donor. Residue Thr-173 participates in (2E)-4-hydroxy-3-methylbut-2-enyl diphosphate binding. Cys-202 contributes to the [4Fe-4S] cluster binding site. (2E)-4-hydroxy-3-methylbut-2-enyl diphosphate-binding residues include Ser-230, Asn-232, and Ser-274. The dimethylallyl diphosphate site is built by Ser-230, Asn-232, and Ser-274. Isopentenyl diphosphate contacts are provided by Ser-230, Asn-232, and Ser-274.

This sequence belongs to the IspH family. The cofactor is [4Fe-4S] cluster.

The enzyme catalyses isopentenyl diphosphate + 2 oxidized [2Fe-2S]-[ferredoxin] + H2O = (2E)-4-hydroxy-3-methylbut-2-enyl diphosphate + 2 reduced [2Fe-2S]-[ferredoxin] + 2 H(+). It catalyses the reaction dimethylallyl diphosphate + 2 oxidized [2Fe-2S]-[ferredoxin] + H2O = (2E)-4-hydroxy-3-methylbut-2-enyl diphosphate + 2 reduced [2Fe-2S]-[ferredoxin] + 2 H(+). It participates in isoprenoid biosynthesis; dimethylallyl diphosphate biosynthesis; dimethylallyl diphosphate from (2E)-4-hydroxy-3-methylbutenyl diphosphate: step 1/1. It functions in the pathway isoprenoid biosynthesis; isopentenyl diphosphate biosynthesis via DXP pathway; isopentenyl diphosphate from 1-deoxy-D-xylulose 5-phosphate: step 6/6. Its function is as follows. Catalyzes the conversion of 1-hydroxy-2-methyl-2-(E)-butenyl 4-diphosphate (HMBPP) into a mixture of isopentenyl diphosphate (IPP) and dimethylallyl diphosphate (DMAPP). Acts in the terminal step of the DOXP/MEP pathway for isoprenoid precursor biosynthesis. The sequence is that of 4-hydroxy-3-methylbut-2-enyl diphosphate reductase from Nitratidesulfovibrio vulgaris (strain ATCC 29579 / DSM 644 / CCUG 34227 / NCIMB 8303 / VKM B-1760 / Hildenborough) (Desulfovibrio vulgaris).